The chain runs to 414 residues: Serine/threonine transporter SstT (414 aa).

8 consecutive transmembrane segments (helical) span residues Gly-16 to Ser-36, Leu-46 to Val-66, Ile-84 to Phe-104, Ala-143 to Leu-163, Ala-180 to Val-200, Leu-219 to Phe-239, Met-300 to Val-320, and Val-332 to Ile-352.

It belongs to the dicarboxylate/amino acid:cation symporter (DAACS) (TC 2.A.23) family.

The protein resides in the cell inner membrane. The catalysed reaction is L-serine(in) + Na(+)(in) = L-serine(out) + Na(+)(out). It catalyses the reaction L-threonine(in) + Na(+)(in) = L-threonine(out) + Na(+)(out). In terms of biological role, involved in the import of serine and threonine into the cell, with the concomitant import of sodium (symport system). In Salmonella dublin (strain CT_02021853), this protein is Serine/threonine transporter SstT.